A 562-amino-acid polypeptide reads, in one-letter code: DNA ligase (562 aa).

Position 250 (E250) interacts with ATP. K252 acts as the N6-AMP-lysine intermediate in catalysis. ATP-binding residues include R257, R272, E302, F342, R417, and K423.

This sequence belongs to the ATP-dependent DNA ligase family. Mg(2+) is required as a cofactor. It depends on Zn(2+) as a cofactor.

It carries out the reaction ATP + (deoxyribonucleotide)n-3'-hydroxyl + 5'-phospho-(deoxyribonucleotide)m = (deoxyribonucleotide)n+m + AMP + diphosphate.. It catalyses the reaction NAD(+) + (deoxyribonucleotide)n-3'-hydroxyl + 5'-phospho-(deoxyribonucleotide)m = (deoxyribonucleotide)n+m + AMP + beta-nicotinamide D-nucleotide.. DNA ligase that seals nicks in double-stranded DNA during DNA replication, DNA recombination and DNA repair. Can use both ATP and NAD(+), but NAD(+) may be a preferred nucleotide cofactor. This chain is DNA ligase, found in Thermococcus onnurineus (strain NA1).